The sequence spans 152 residues: Protein FERTILITY RESTORER RF2, mitochondrial (152 aa).

Residues Met1–Cys52 constitute a mitochondrion transit peptide. A compositionally biased stretch (polar residues) spans Cys52–Val69. A disordered region spans residues Cys52–Gly99.

Its subcellular location is the mitochondrion. In terms of biological role, restores fertility in rice varieties with LD-type cytoplasmic male sterility (CMS). CMS is caused by genetic incompatibility between nuclei and mitochondria within male reproductive organs. Corresponds to the functional allele of RF2, which is dependent of the presence of Ile-78 in the japonica cultivars Fukuyama and Owarihatamochi (AC F1SZ42), and indica cultivar Kasalath (AC F1SZ41). Non-functional RF2 alleles are found in japonica cultivars Taichung 65 and Nipponbare (AC F1SZ44), where Ile-78 is replaced by Thr-78. This is Protein FERTILITY RESTORER RF2, mitochondrial from Oryza sativa subsp. japonica (Rice).